The following is a 444-amino-acid chain: ATP-dependent RNA helicase DBP8 (444 aa).

The short motif at 3–31 (QSFKELGVAKWLSESLEAMKIHSPTSIQS) is the Q motif element. Residues 34–210 (IPEILKGRDC…DKPRAEGKLP (177 aa)) form the Helicase ATP-binding domain. 47–54 (AKTGSGKT) contacts ATP. The DEAD box motif lies at 156 to 159 (DEAD). Positions 244 to 390 (YLTSILKLPK…LLEGVDDDKV (147 aa)) constitute a Helicase C-terminal domain. The span at 402-418 (KREAMLDMDKESFGERR) shows a compositional bias: basic and acidic residues. The tract at residues 402–444 (KREAMLDMDKESFGERRKVNKKKRAVEEPSGKRQQKKVKKVKS) is disordered. Residues 434-444 (RQQKKVKKVKS) show a composition bias toward basic residues.

The protein belongs to the DEAD box helicase family. DDX49/DBP8 subfamily.

The protein localises to the nucleus. Its subcellular location is the nucleolus. It carries out the reaction ATP + H2O = ADP + phosphate + H(+). Functionally, ATP-binding RNA helicase involved in 40S ribosomal subunit biogenesis and is required for the normal formation of 18S rRNAs through pre-rRNA processing at A0, A1 and A2 sites. Required for vegetative growth. The protein is ATP-dependent RNA helicase DBP8 (DBP8) of Lodderomyces elongisporus (strain ATCC 11503 / CBS 2605 / JCM 1781 / NBRC 1676 / NRRL YB-4239) (Yeast).